A 338-amino-acid polypeptide reads, in one-letter code: Anthranilate phosphoribosyltransferase (338 aa).

5-phospho-alpha-D-ribose 1-diphosphate contacts are provided by residues glycine 81, 84-85, threonine 89, 91-94, 109-117, and alanine 121; these read GD, NVST, and KHGNRALSS. Glycine 81 lines the anthranilate pocket. Serine 93 serves as a coordination point for Mg(2+). Asparagine 112 serves as a coordination point for anthranilate. Anthranilate is bound at residue arginine 167. Mg(2+) contacts are provided by aspartate 225 and glutamate 226.

The protein belongs to the anthranilate phosphoribosyltransferase family. As to quaternary structure, homodimer. Mg(2+) is required as a cofactor.

It carries out the reaction N-(5-phospho-beta-D-ribosyl)anthranilate + diphosphate = 5-phospho-alpha-D-ribose 1-diphosphate + anthranilate. The protein operates within amino-acid biosynthesis; L-tryptophan biosynthesis; L-tryptophan from chorismate: step 2/5. Its function is as follows. Catalyzes the transfer of the phosphoribosyl group of 5-phosphorylribose-1-pyrophosphate (PRPP) to anthranilate to yield N-(5'-phosphoribosyl)-anthranilate (PRA). This Chelativorans sp. (strain BNC1) protein is Anthranilate phosphoribosyltransferase.